Reading from the N-terminus, the 330-residue chain is DNA-directed RNA polymerase subunit alpha (330 aa).

Residues 1–232 (MAILAFQKPD…YHFMLFSDEK (232 aa)) form an alpha N-terminal domain (alpha-NTD) region. The alpha C-terminal domain (alpha-CTD) stretch occupies residues 248–330 (EEVLHMRQLL…DISKYKLDKE (83 aa)).

The protein belongs to the RNA polymerase alpha chain family. Homodimer. The RNAP catalytic core consists of 2 alpha, 1 beta, 1 beta' and 1 omega subunit. When a sigma factor is associated with the core the holoenzyme is formed, which can initiate transcription.

It carries out the reaction RNA(n) + a ribonucleoside 5'-triphosphate = RNA(n+1) + diphosphate. Its function is as follows. DNA-dependent RNA polymerase catalyzes the transcription of DNA into RNA using the four ribonucleoside triphosphates as substrates. The protein is DNA-directed RNA polymerase subunit alpha of Bacteroides fragilis (strain ATCC 25285 / DSM 2151 / CCUG 4856 / JCM 11019 / LMG 10263 / NCTC 9343 / Onslow / VPI 2553 / EN-2).